The following is a 660-amino-acid chain: Putative ATP-dependent RNA helicase Pl10 (660 aa).

The segment covering 1–11 (MSHVAEEDELG) has biased composition (acidic residues). The interval 1–117 (MSHVAEEDEL…SRGGRSGFGK (117 aa)) is disordered. Serine 2 bears the N-acetylserine mark. Low complexity predominate over residues 12–21 (LDQQLAGLDL). Residues 24–34 (RDSQSGGSTAS) show a composition bias toward polar residues. Over residues 44-66 (RNREAAKAFYDKDGSRWSKDKDA) the composition is skewed to basic and acidic residues. Lysine 55 is subject to N6-acetyllysine. Phosphoserine occurs at positions 80, 84, and 89. Basic and acidic residues predominate over residues 93 to 103 (GRFDERGRSDY). Omega-N-methylarginine is present on arginine 100. The residue at position 101 (serine 101) is a Phosphoserine. Tyrosine 103 bears the Phosphotyrosine mark. The residue at position 109 (arginine 109) is an Omega-N-methylarginine. Lysine 117 bears the N6-acetyllysine mark. The Q motif signature appears at 179 to 207 (ESFSDVEMGEIIMGNIELTRYTRPTPVQK). Serine 182 carries the post-translational modification Phosphoserine. 199-206 (YTRPTPVQ) provides a ligand contact to ATP. Positions 210–402 (IPIIKEKRDL…RDFLDEYIFL (193 aa)) constitute a Helicase ATP-binding domain. Lysine 214 participates in a covalent cross-link: Glycyl lysine isopeptide (Lys-Gly) (interchain with G-Cter in SUMO2). Position 223–230 (223–230 (AQTGSGKT)) interacts with ATP. The DEAD box signature appears at 346-349 (DEAD). Positions 413–574 (NITQKVVWVE…EVPSWLENMA (162 aa)) constitute a Helicase C-terminal domain. Serine 455 carries the phosphoserine modification. An Omega-N-methylarginine modification is found at arginine 590. Phosphoserine is present on residues serine 592, serine 603, and serine 610. A disordered region spans residues 598 to 632 (RDYRQSSGASSSSFSSGRASNSRSGGGSHGSSRGF). A compositionally biased stretch (low complexity) spans 602 to 620 (QSSGASSSSFSSGRASNSR). Residues arginine 615 and arginine 630 each carry the omega-N-methylarginine modification. Gly residues predominate over residues 621–632 (SGGGSHGSSRGF).

The protein belongs to the DEAD box helicase family. DDX3/DED1 subfamily. As to expression, testis.

The catalysed reaction is ATP + H2O = ADP + phosphate + H(+). In terms of biological role, putative ATP-dependent RNA helicase. Possible role in a key step of the spermatogenic process. The sequence is that of Putative ATP-dependent RNA helicase Pl10 (D1Pas1) from Mus musculus (Mouse).